The primary structure comprises 148 residues: Prefoldin subunit alpha (148 aa).

Belongs to the prefoldin subunit alpha family. Heterohexamer of two alpha and four beta subunits.

The protein resides in the cytoplasm. Its function is as follows. Molecular chaperone capable of stabilizing a range of proteins. Seems to fulfill an ATP-independent, HSP70-like function in archaeal de novo protein folding. The protein is Prefoldin subunit alpha (pfdA) of Pyrococcus horikoshii (strain ATCC 700860 / DSM 12428 / JCM 9974 / NBRC 100139 / OT-3).